The chain runs to 512 residues: Glutamyl-tRNA(Gln) amidotransferase subunit A (512 aa).

Active-site charge relay system residues include lysine 82 and serine 157. Serine 181 functions as the Acyl-ester intermediate in the catalytic mechanism.

The protein belongs to the amidase family. GatA subfamily. As to quaternary structure, heterotrimer of A, B and C subunits.

It carries out the reaction L-glutamyl-tRNA(Gln) + L-glutamine + ATP + H2O = L-glutaminyl-tRNA(Gln) + L-glutamate + ADP + phosphate + H(+). Functionally, allows the formation of correctly charged Gln-tRNA(Gln) through the transamidation of misacylated Glu-tRNA(Gln) in organisms which lack glutaminyl-tRNA synthetase. The reaction takes place in the presence of glutamine and ATP through an activated gamma-phospho-Glu-tRNA(Gln). This chain is Glutamyl-tRNA(Gln) amidotransferase subunit A, found in Bordetella bronchiseptica (strain ATCC BAA-588 / NCTC 13252 / RB50) (Alcaligenes bronchisepticus).